An 861-amino-acid chain; its full sequence is Nuclear cap-binding protein complex subunit 1 (861 aa).

Residues 22–30 carry the Nuclear localization signal motif; sequence RMPKRQRIP. In terms of domain architecture, MIF4G spans 36–264; the sequence is CKEMMPDIRT…LVRVVLPNVK (229 aa).

This sequence belongs to the NCBP1 family. As to quaternary structure, component of the nuclear cap-binding complex (CBC), a heterodimer composed of STO1/CBC1 and CBC2 that interacts with capped RNAs. The complex interacts strongly with the importin subunit alpha SRP1. The SRP1-CBC trimer also binds to capped RNAs, but formation of the importin alpha/beta heterodimer upon binding of KAP95 to SRP1 in the cytoplasm causes dissociation of CBC from the RNA. The CBC complex is part of the commitment complex 1 (CC1), binding to the cap of pre-mRNA and interacting with U1 snRNP subunits MUD2 and SNU56. The CBC complex is part of the NRD1 complex, composed of CBC2, NAB1, NRD1, SEN1 and STO1/CBC2. The CBC complex also interacts with NPL3 and eIF4G (TIF4631 and TIF4632).

The protein localises to the nucleus. It is found in the cytoplasm. The protein resides in the perinuclear region. Functionally, component of the CBC complex, which binds co-transcriptionally to the 5'-cap of pre-mRNAs and is involved in maturation, export and degradation of nuclear mRNAs. The CBC complex is required for efficient pre-mRNA splicing through efficient commitment complex and spliceosome formation. Together with NPL3, the CBC complex is required for export of mRNAs out of the nucleus. The CBC complex is also involved in nuclear mRNA degradation, probably by directing the mRNAs to the sites of degradation. Affects replication of the positive-strand RNA virus BMV. This is Nuclear cap-binding protein complex subunit 1 (STO1) from Saccharomyces cerevisiae (strain ATCC 204508 / S288c) (Baker's yeast).